Consider the following 146-residue polypeptide: MSAALSRDATLLAFDYGEKRIGVAVGNLLTRTARALVIVRNLNREHRFKAVGELIAEWKPDALVVGLPLHPDGAPHEMTQRAMRFGNQLNGRFNLPVNWVDERYSSVEARAGLRARGDAADRVDAEAARVILQQYLDGLPDHHEFN.

It belongs to the YqgF nuclease family.

Its subcellular location is the cytoplasm. Could be a nuclease involved in processing of the 5'-end of pre-16S rRNA. In Burkholderia pseudomallei (strain 668), this protein is Putative pre-16S rRNA nuclease.